The primary structure comprises 97 residues: Osteocalcin (97 aa).

An N-terminal signal peptide occupies residues 1–20 (MKAAALLLLAALLTFSLCRS). Positions 21–48 (APDGSDARSAKAFISHRQRAEMVRRQKR) are excised as a propeptide. The 47-residue stretch at 49–95 (HYAQDSGVAGAPPNPLEAQREVCELSPDCDELADQIGFQEAYRRFYG) folds into the Gla domain. Ca(2+) contacts are provided by E65, E69, E72, and D78. Residues E65, E69, and E72 each carry the 4-carboxyglutamate modification. Cysteines 71 and 77 form a disulfide.

The protein belongs to the osteocalcin/matrix Gla protein family. In terms of processing, gamma-carboxyglutamate residues are formed by vitamin K dependent carboxylation by GGCX. These residues are essential for the binding of calcium.

The protein localises to the secreted. Its function is as follows. The carboxylated form is one of the main organic components of the bone matrix, which constitutes 1-2% of the total bone protein. The carboxylated form binds strongly to apatite and calcium. In Gallus gallus (Chicken), this protein is Osteocalcin (BGLAP).